Here is a 242-residue protein sequence, read N- to C-terminus: 7-cyano-7-deazaguanine synthase (242 aa).

The interval 1 to 25 is disordered; sequence MNSRKDKNSKGKNSDTKRKKSSQEN. 32–42 provides a ligand contact to ATP; that stretch reads LSGGLDSTTCL. Zn(2+) is bound by residues Cys212, Cys221, Cys224, and Cys227.

This sequence belongs to the QueC family. The cofactor is Zn(2+).

It carries out the reaction 7-carboxy-7-deazaguanine + NH4(+) + ATP = 7-cyano-7-deazaguanine + ADP + phosphate + H2O + H(+). The protein operates within purine metabolism; 7-cyano-7-deazaguanine biosynthesis. Functionally, catalyzes the ATP-dependent conversion of 7-carboxy-7-deazaguanine (CDG) to 7-cyano-7-deazaguanine (preQ(0)). The sequence is that of 7-cyano-7-deazaguanine synthase from Leptospira borgpetersenii serovar Hardjo-bovis (strain JB197).